The following is a 563-amino-acid chain: Methylcrotonoyl-CoA carboxylase beta chain, mitochondrial (563 aa).

Residues 1-22 (MWGALRSVLRPCSRASVPRQRA) constitute a mitochondrion transit peptide. Positions 49–306 (MKALVNQLHE…QKKLDVTVEP (258 aa)) constitute a CoA carboxyltransferase N-terminal domain. The tract at residues 49 to 555 (MKALVNQLHE…SAALNAPIQR (507 aa)) is carboxyltransferase. N6-acetyllysine; alternate is present on K70. K70 carries the N6-succinyllysine; alternate modification. The residue at position 141 (K141) is an N6-succinyllysine. Positions 309–555 (EPLFPADELY…SAALNAPIQR (247 aa)) constitute a CoA carboxyltransferase C-terminal domain. The segment at 343–372 (RFNEFKALYGDTLVTGFARIFGYPVGIIGN) is acyl-CoA binding. At K433 the chain carries N6-succinyllysine. N6-acetyllysine; alternate is present on K495. The residue at position 495 (K495) is an N6-succinyllysine; alternate. K511 carries the N6-acetyllysine modification.

Belongs to the AccD/PCCB family. As to quaternary structure, probably a dodecamer composed of six biotin-containing alpha subunits (MCCC1) and six beta (MCCC2) subunits.

It localises to the mitochondrion matrix. The catalysed reaction is 3-methylbut-2-enoyl-CoA + hydrogencarbonate + ATP = 3-methyl-(2E)-glutaconyl-CoA + ADP + phosphate + H(+). It functions in the pathway amino-acid degradation; L-leucine degradation; (S)-3-hydroxy-3-methylglutaryl-CoA from 3-isovaleryl-CoA: step 2/3. Its function is as follows. Carboxyltransferase subunit of the 3-methylcrotonyl-CoA carboxylase, an enzyme that catalyzes the conversion of 3-methylcrotonyl-CoA to 3-methylglutaconyl-CoA, a critical step for leucine and isovaleric acid catabolism. The sequence is that of Methylcrotonoyl-CoA carboxylase beta chain, mitochondrial (Mccc2) from Rattus norvegicus (Rat).